The chain runs to 466 residues: ATP synthase subunit beta (466 aa).

156–163 (GGAGVGKT) lines the ATP pocket.

It belongs to the ATPase alpha/beta chains family. As to quaternary structure, F-type ATPases have 2 components, CF(1) - the catalytic core - and CF(0) - the membrane proton channel. CF(1) has five subunits: alpha(3), beta(3), gamma(1), delta(1), epsilon(1). CF(0) has three main subunits: a(1), b(2) and c(9-12). The alpha and beta chains form an alternating ring which encloses part of the gamma chain. CF(1) is attached to CF(0) by a central stalk formed by the gamma and epsilon chains, while a peripheral stalk is formed by the delta and b chains.

The protein localises to the cell membrane. The catalysed reaction is ATP + H2O + 4 H(+)(in) = ADP + phosphate + 5 H(+)(out). In terms of biological role, produces ATP from ADP in the presence of a proton gradient across the membrane. The catalytic sites are hosted primarily by the beta subunits. In Buchnera aphidicola subsp. Schizaphis graminum (strain Sg), this protein is ATP synthase subunit beta.